The chain runs to 121 residues: Large ribosomal subunit protein uL22 (121 aa).

This sequence belongs to the universal ribosomal protein uL22 family. In terms of assembly, part of the 50S ribosomal subunit.

This protein binds specifically to 23S rRNA; its binding is stimulated by other ribosomal proteins, e.g. L4, L17, and L20. It is important during the early stages of 50S assembly. It makes multiple contacts with different domains of the 23S rRNA in the assembled 50S subunit and ribosome. Functionally, the globular domain of the protein is located near the polypeptide exit tunnel on the outside of the subunit, while an extended beta-hairpin is found that lines the wall of the exit tunnel in the center of the 70S ribosome. The sequence is that of Large ribosomal subunit protein uL22 from Synechococcus sp. (strain CC9605).